A 182-amino-acid polypeptide reads, in one-letter code: Protein Syd (182 aa).

It belongs to the Syd family.

The protein localises to the cell inner membrane. Functionally, interacts with the SecY protein in vivo. May bind preferentially to an uncomplexed state of SecY, thus functioning either as a chelating agent for excess SecY in the cell or as a regulatory factor that negatively controls the translocase function. The chain is Protein Syd from Aliivibrio salmonicida (strain LFI1238) (Vibrio salmonicida (strain LFI1238)).